The sequence spans 284 residues: Protease HtpX (284 aa).

The next 2 membrane-spanning stretches (helical) occupy residues 4-24 and 33-53; these read ILLF…ILSL and MGLL…SLLM. Position 139 (His139) interacts with Zn(2+). Glu140 is an active-site residue. Position 143 (His143) interacts with Zn(2+). 2 helical membrane-spanning segments follow: residues 147-167 and 187-207; these read GDMV…IFAA and IYFL…SMIA. Position 215 (Glu215) interacts with Zn(2+).

The protein belongs to the peptidase M48B family. The cofactor is Zn(2+).

The protein localises to the cell inner membrane. The protein is Protease HtpX of Mannheimia succiniciproducens (strain KCTC 0769BP / MBEL55E).